A 441-amino-acid chain; its full sequence is UBX domain-containing protein 6 (441 aa).

Residues 1–10 (MKKFFQEIKA) are mediates interaction with LMAN1. Disordered regions lie at residues 12–57 (IKFK…MAAA), 62–81 (RLEQKQPRARGPTSQDSIRN), and 86–113 (ELRAEAAVSGDPEAPGSNTAPEPKEEGS). The span at 27-36 (VGEKAPKEKP) shows a compositional bias: basic and acidic residues. A VCP/p97-interacting motif (VIM) region spans residues 51-63 (EAQMAAAAALARL). The region spanning 175–244 (VDTIAKYLDN…GPEEFYVLSE (70 aa)) is the PUB domain. Residues 332-408 (RKYTYTLLRV…GLVPSALLTF (77 aa)) form the UBX domain.

In terms of assembly, interacts with VCP through the PUB domain (via C-terminus) and VIM motif (via N-terminus); the interaction is direct. Forms a ternary complex with CAV1 and VCP. Interacts with SYVN1. Interacts with HERPUD1. Interacts with VCPKMT. May interact with DERL1. Interacts with PLAA, VCP and YOD1; may form a complex involved in macroautophagy. Interacts with LMAN1.

It is found in the cytoplasm. The protein resides in the cytosol. It localises to the membrane. Its subcellular location is the nucleus. The protein localises to the cytoskeleton. It is found in the microtubule organizing center. The protein resides in the centrosome. It localises to the early endosome membrane. Its subcellular location is the late endosome membrane. The protein localises to the lysosome membrane. Its function is as follows. May negatively regulate the ATPase activity of VCP, an ATP-driven segregase that associates with different cofactors to control a wide variety of cellular processes. As a cofactor of VCP, it may play a role in the transport of CAV1 to lysosomes for degradation. It may also play a role in endoplasmic reticulum-associated degradation (ERAD) of misfolded proteins. Together with VCP and other cofactors, it may play a role in macroautophagy, regulating for instance the clearance of damaged lysosomes. This chain is UBX domain-containing protein 6, found in Bos taurus (Bovine).